The following is a 437-amino-acid chain: GTPase Era, mitochondrial (437 aa).

The transit peptide at 1–20 (MAAPRRYCAGLVRALLGARQ) directs the protein to the mitochondrion. The region spanning 112 to 330 (RVLRVVLLGA…QYLLTQAQPG (219 aa)) is the Era-type G domain. A G1 region spans residues 120–127 (GAPNAGKS). 120-127 (GAPNAGKS) is a binding site for GTP. The tract at residues 146-150 (HTTRC) is G2. The tract at residues 167–170 (DTPG) is G3. 167 to 171 (DTPGI) is a GTP binding site. At S173 the chain carries Phosphoserine. 236-239 (NKVD) is a GTP binding site. The segment at 236–239 (NKVD) is G4. The tract at residues 270–292 (LRSRSSTHCPGPETEGPNAHSVR) is disordered. The G5 stretch occupies residues 308 to 310 (LSA). The 78-residue stretch at 360 to 437 (LPEEVPYGVQ…LIRLSVKLLK (78 aa)) folds into the KH type-2 domain.

It belongs to the TRAFAC class TrmE-Era-EngA-EngB-Septin-like GTPase superfamily. Era GTPase family.

Its subcellular location is the mitochondrion matrix. The protein resides in the mitochondrion inner membrane. Functionally, probable GTPase that plays a role in the mitochondrial ribosomal small subunit assembly. Specifically binds the 12S mitochondrial rRNA (12S mt-rRNA) to a 33 nucleotide section delineating the 3' terminal stem-loop region. May act as a chaperone that protects the 12S mt-rRNA on the 28S mitoribosomal subunit during ribosomal small subunit assembly. This is GTPase Era, mitochondrial (Eral1) from Mus musculus (Mouse).